Reading from the N-terminus, the 91-residue chain is Cell division topological specificity factor (91 aa).

This sequence belongs to the MinE family.

In terms of biological role, prevents the cell division inhibition by proteins MinC and MinD at internal division sites while permitting inhibition at polar sites. This ensures cell division at the proper site by restricting the formation of a division septum at the midpoint of the long axis of the cell. The chain is Cell division topological specificity factor from Bradyrhizobium diazoefficiens (strain JCM 10833 / BCRC 13528 / IAM 13628 / NBRC 14792 / USDA 110).